The sequence spans 545 residues: Chaperonin GroEL (545 aa).

ATP contacts are provided by residues 29–32 (TMGP), Lys-50, 86–90 (DGTTT), Gly-414, 477–479 (DAA), and Asp-493.

The protein belongs to the chaperonin (HSP60) family. As to quaternary structure, forms a cylinder of 14 subunits composed of two heptameric rings stacked back-to-back. Interacts with the co-chaperonin GroES.

The protein resides in the cytoplasm. The catalysed reaction is ATP + H2O + a folded polypeptide = ADP + phosphate + an unfolded polypeptide.. Its function is as follows. Together with its co-chaperonin GroES, plays an essential role in assisting protein folding. The GroEL-GroES system forms a nano-cage that allows encapsulation of the non-native substrate proteins and provides a physical environment optimized to promote and accelerate protein folding. This is Chaperonin GroEL from Campylobacter jejuni (strain RM1221).